We begin with the raw amino-acid sequence, 208 residues long: Large ribosomal subunit protein uL3 (208 aa).

Residues 116 to 148 are disordered; the sequence is GFQGVIKRHGQSRGPMAHGSRYHRRPGSMGPVA.

It belongs to the universal ribosomal protein uL3 family. In terms of assembly, part of the 50S ribosomal subunit. Forms a cluster with proteins L14 and L19.

In terms of biological role, one of the primary rRNA binding proteins, it binds directly near the 3'-end of the 23S rRNA, where it nucleates assembly of the 50S subunit. This chain is Large ribosomal subunit protein uL3, found in Streptococcus pyogenes serotype M6 (strain ATCC BAA-946 / MGAS10394).